The sequence spans 267 residues: MKVLIIFAHPEPQSLNGALHRVAVEELEEQGHHVQVSDLYKMKWKSEVDREDFPNFPKDQRLDLWTASAEAYAENSLTQDVLDEQAKLRWADFVIFHFPLWWFTMPAILKGWVDRVYTYGFGHGLGEHSDKRWGDRYGEGTLTGKRAMLIVTLGGWKEHYSARGISGPIEDVLFPINHGILFYPGFEVLPPFVAFRVHKTSFDEMASTLRKRMREIEFTKPIPYRNQNDGEYSIPTLTLHESHGGDLASGFGLHTRTEVETTDVKEA.

FAD is bound by residues His9, 15–16 (LN), and 100–103 (LWWF). 122–124 (GHG) is a binding site for substrate. FAD-binding positions include 152 to 155 (TLGG) and Tyr160.

Belongs to the NAD(P)H dehydrogenase (quinone) family. As to quaternary structure, homodimer. FAD serves as cofactor.

It participates in secondary metabolite biosynthesis. Functionally, ribosyldihydronicotinamide dehydrogenase-like protein; part of the tra gene cluster that produces terrestric acid. The clavatol biosynthesis cluster cla and the terrestric acid cluster tra are both involved in the production of peniphenones and penilactones. The non-reducing PKS claF is responsible for the formation of clavatol from successive condensations of 3 malonyl-CoA units, presumably with a simple acetyl-CoA starter unit, and 2 methylation steps. The esterase claE probably collaborates with claF by catalyzing the hydrolysis of ACP-bound acyl intermediates to free the ACP from stalled intermediates. The clavatol oxidase claD then converts clavatol to hydroxyclavatol. Spontaneous dehydration of hydroxyclavatol leads to the accumulation of the highly active ortho-quinone methide. On the other hand, the PKS-NRPS hybrid traA is involved in the formation of crustosic acid, with the help of traB and traD. The polyketide synthase module (PKS) of traA is responsible for the synthesis of the polyketide backbone via the condensation of an acetyl-CoA starter unit with 3 malonyl-CoA units. The downstream nonribosomal peptide synthetase (NRPS) module then amidates the carboxyl end of the polyketide with L-malic acid. Because traA lacks a designated enoylreductase (ER) domain, the required activity is provided the enoyl reductase traG. Crustosic acid undergoes decarboxylation and isomerization to the terrestric acid, catalyzed by the 2-oxoglutarate-dependent dioxygenase traH. Both acids are further converted to the 2 gamma-butyrolactones (R)-5-methyltetronic acid and (S)-5-carboxylmethyltetronic acid, with involvement of the cytochrome P450 monooxygenase claJ. Spontaneous addition of the methide to these gamma-butyrolactones leads to peniphenone D and penilactone D, which undergo again stereospecific attacking by methide to give penilactones A and B. In Penicillium crustosum (Blue mold fungus), this protein is Ribosyldihydronicotinamide dehydrogenase-like protein traD.